Here is a 484-residue protein sequence, read N- to C-terminus: ETS translocation variant 4 (484 aa).

Lys-6 participates in a covalent cross-link: Glycyl lysine isopeptide (Lys-Gly) (interchain with G-Cter in SUMO2). The segment at 90-115 (SPTTRIKKEPQSPRTDPALSCSRKPP) is disordered. A Glycyl lysine isopeptide (Lys-Gly) (interchain with G-Cter in SUMO) cross-link involves residue Lys-96. The residue at position 101 (Ser-101) is a Phosphoserine. Lys-139 participates in a covalent cross-link: Glycyl lysine isopeptide (Lys-Gly) (interchain with G-Cter in SUMO2). A phosphoserine mark is found at Ser-140, Ser-149, and Ser-214. Glycyl lysine isopeptide (Lys-Gly) (interchain with G-Cter in SUMO) cross-links involve residues Lys-226 and Lys-260. Residue Lys-322 forms a Glycyl lysine isopeptide (Lys-Gly) (interchain with G-Cter in SUMO2) linkage. The segment at residues 341–421 (LQLWQFLVAL…AGERYVYKFV (81 aa)) is a DNA-binding region (ETS).

Belongs to the ETS family. In terms of processing, sumoylated; enhanced upon ERK/MAP kinase pathway activation, it positively regulates the transcriptional activator capacity. Sumoylation at Lys-96 probably requires phosphorylation at Ser-101. Transiently polysumoylated and desumoylated by SENP1. Sumoylation is a prerequisite to polyubiquitination which in turn increases proteasomal-mediated degradation. Probably polyubiquitinated by RNF4 and deubiquitinated by USP2. As to expression, expressed in keratinocytes.

The protein localises to the nucleus. Functionally, transcriptional activator. May play a role in keratinocyte differentiation. (Microbial infection) Binds to the enhancer of the adenovirus E1A gene and acts as a transcriptional activator; the core-binding sequence is 5'-[AC]GGA[AT]GT-3'. The protein is ETS translocation variant 4 (ETV4) of Homo sapiens (Human).